The sequence spans 549 residues: MIGHLAAMLPPPSTNSPELTVSELSAALKRTLEDRFGIVRLRGEISNYRGPHSSGHAYFCLKDQNARIDAVIWKTTFMRLKVKPEEGLEVIATGKITTYAGKSSYQIVVEAIEPAGLGALMALFEARRRQLASEGLFDEERKRALPFLPAVIGVITSPTGAVIRDILHRITERFPRPVLLWPVRVQGETAAAEVSAAIEGFNALPVTGQGPLHRPDLLIVARGGGSLEDLWGFNEENVVRAAAASSIPLIAAIGHETDWTLIDYAADLRAPTPTGAAEKAVPVRADLLTSLNDLQRRHAGAAYRLLERRRSDLRALARALPQADSLLATPRQRLDRTATRLATACLRAQDQRGLVLGRLAHRLSRQAPHASLARLGQKLEAFGRGLGRACEIAQERRRQSLLHLGIRLTQNFTQGIRVERERVHGRRQKLASLDNRLRQAMSLTLSQRQARLANLAQLTRSLSYHAVLARGFALVRDETGQPLRRAADIIENHVLTLEFSDGCRQAVAGALVATDPPVDPKPTRKPVQKSSSPKPSSRKPKKSQQEDLF.

Positions Leu511–Phe549 are disordered.

The protein belongs to the XseA family. Heterooligomer composed of large and small subunits.

The protein localises to the cytoplasm. It catalyses the reaction Exonucleolytic cleavage in either 5'- to 3'- or 3'- to 5'-direction to yield nucleoside 5'-phosphates.. Functionally, bidirectionally degrades single-stranded DNA into large acid-insoluble oligonucleotides, which are then degraded further into small acid-soluble oligonucleotides. This chain is Exodeoxyribonuclease 7 large subunit, found in Beijerinckia indica subsp. indica (strain ATCC 9039 / DSM 1715 / NCIMB 8712).